The sequence spans 210 residues: Putative 3-methyladenine DNA glycosylase (210 aa).

The protein belongs to the DNA glycosylase MPG family.

This chain is Putative 3-methyladenine DNA glycosylase, found in Lactobacillus helveticus (strain DPC 4571).